Consider the following 136-residue polypeptide: Large ribosomal subunit protein uL13 (136 aa).

The protein belongs to the universal ribosomal protein uL13 family. In terms of assembly, part of the 50S ribosomal subunit.

Functionally, this protein is one of the early assembly proteins of the 50S ribosomal subunit, although it is not seen to bind rRNA by itself. It is important during the early stages of 50S assembly. The protein is Large ribosomal subunit protein uL13 of Thermoplasma volcanium (strain ATCC 51530 / DSM 4299 / JCM 9571 / NBRC 15438 / GSS1).